Consider the following 79-residue polypeptide: Cytochrome b (79 aa).

3 helical membrane-spanning segments follow: residues 1–7 (TALLLAA), 31–52 (WLIR…YLHI), and 67–79 (WNIG…TLMA). Residues H37 and H51 each coordinate heme b.

The protein belongs to the cytochrome b family. The cytochrome bc1 complex contains 11 subunits: 3 respiratory subunits (MT-CYB, CYC1 and UQCRFS1), 2 core proteins (UQCRC1 and UQCRC2) and 6 low-molecular weight proteins (UQCRH/QCR6, UQCRB/QCR7, UQCRQ/QCR8, UQCR10/QCR9, UQCR11/QCR10 and a cleavage product of UQCRFS1). This cytochrome bc1 complex then forms a dimer. The cofactor is heme b.

Its subcellular location is the mitochondrion inner membrane. Functionally, component of the ubiquinol-cytochrome c reductase complex (complex III or cytochrome b-c1 complex) that is part of the mitochondrial respiratory chain. The b-c1 complex mediates electron transfer from ubiquinol to cytochrome c. Contributes to the generation of a proton gradient across the mitochondrial membrane that is then used for ATP synthesis. This Pomatostomus superciliosus (White-browed babbler) protein is Cytochrome b (MT-CYB).